A 662-amino-acid polypeptide reads, in one-letter code: Intracellular exo-alpha-(1-&gt;5)-L-arabinofuranosidase (662 aa).

The alpha-L-arabinofuranose site is built by Glu27, Asn72, and Asn174. Residue Glu175 is the Proton donor/acceptor of the active site. The alpha-L-arabinofuranose site is built by Tyr246, Glu294, and Gln352. Glu294 (nucleophile) is an active-site residue. Disordered regions lie at residues 454 to 483 (LADA…SLRD), 497 to 548 (SIRC…RTAR), and 588 to 662 (WTRW…ARRC). Residues 519–533 (TGTPPAAPPSSSSAP) are compositionally biased toward low complexity. Over residues 537-547 (PTARRSPDRTA) the composition is skewed to basic and acidic residues. Low complexity-rich tracts occupy residues 590–603 (RWAP…PSRR), 628–641 (RRSP…TPAP), and 649–662 (AGAS…ARRC).

This sequence belongs to the glycosyl hydrolase 51 family. In terms of assembly, homohexamer; trimer of dimers.

The protein resides in the cytoplasm. It catalyses the reaction Hydrolysis of terminal non-reducing alpha-L-arabinofuranoside residues in alpha-L-arabinosides.. It functions in the pathway glycan metabolism; L-arabinan degradation. Its function is as follows. Involved in the degradation of arabinan and is a key enzyme in the complete degradation of the plant cell wall. Catalyzes the cleavage of terminal alpha-(1-&gt;5)-arabinofuranosyl bonds in different hemicellulosic homopolysaccharides (arabino-oligoxylosides, branched and debranched arabinans). It acts rapidly on the short-chain arabino-oligoxylosides from digestion of xylan with xylanases. It hydrolyzes slowly arabinan and arabinoxylan from wheat and rye flour. This chain is Intracellular exo-alpha-(1-&gt;5)-L-arabinofuranosidase, found in Streptomyces lividans.